The chain runs to 248 residues: Pyridoxal 4-dehydrogenase (248 aa).

11 to 35 (LVTGAAQGIGKAIAARLAADGATVI) contacts NAD(+). A substrate-binding site is contributed by S141. The Proton acceptor role is filled by Y154.

Belongs to the short-chain dehydrogenases/reductases (SDR) family. As to quaternary structure, homotetramer.

It catalyses the reaction pyridoxal + NAD(+) = 4-pyridoxolactone + NADH + H(+). Its pathway is cofactor degradation; B6 vitamer degradation; 4-pyridoxate from pyridoxal: step 1/2. Involved in the degradation of pyridoxine or pyridoxamine (free, phosphate-unbound, forms of vitamin B6). Oxidizes pyridoxal to 4-pyridoxolactone, but does not have activity toward pyridoxal 5'-phosphate, pyridoxine, pyridoxamine, pyridoxamine 5'-phosphate, 4-phthalaldehyde, 2-nitrobenzaldehyde, pyridine, formaldehyde, 2-carboxybenzaldehyde or sugars. The chain is Pyridoxal 4-dehydrogenase from Mesorhizobium japonicum (strain LMG 29417 / CECT 9101 / MAFF 303099) (Mesorhizobium loti (strain MAFF 303099)).